The chain runs to 276 residues: Urease accessory protein UreD (276 aa).

This sequence belongs to the UreD family. UreD, UreF and UreG form a complex that acts as a GTP-hydrolysis-dependent molecular chaperone, activating the urease apoprotein by helping to assemble the nickel containing metallocenter of UreC. The UreE protein probably delivers the nickel.

The protein localises to the cytoplasm. Functionally, required for maturation of urease via the functional incorporation of the urease nickel metallocenter. This Variovorax paradoxus (strain S110) protein is Urease accessory protein UreD.